Here is a 582-residue protein sequence, read N- to C-terminus: Glutaredoxin domain-containing cysteine-rich protein CG12206 (582 aa).

The segment covering 217 to 227 (CETLDSGTGSD) has biased composition (polar residues). 2 disordered regions span residues 217-244 (CETLDSGTGSDLENHPQQQQQPQQVRSP) and 260-300 (EADH…SCDS). The segment covering 291–300 (SSNSSLSCDS) has biased composition (low complexity). One can recognise a Glutaredoxin domain in the interval 423–528 (NVKNYMEKDV…QLLRPYKSIA (106 aa)).

The protein belongs to the GRXCR1 family.

This chain is Glutaredoxin domain-containing cysteine-rich protein CG12206, found in Drosophila melanogaster (Fruit fly).